Reading from the N-terminus, the 406-residue chain is Type II secretion system protein F (406 aa).

At 1-171 the chain is on the cytoplasmic side; it reads MAAFEYKALD…KMRSKLQQAM (171 aa). 3 residues coordinate Ca(2+): E97, E151, and D155. Residues 172–192 form a helical membrane-spanning segment; sequence IYPVVLVVFAVGIVAFLLAAV. Topologically, residues 193 to 223 are periplasmic; it reads VPKIVGQFVQMGQALPASTQFLLDASDFLQH. The chain crosses the membrane as a helical span at residues 224 to 244; sequence WGISLLVGLLMLIYLVRWLLT. The Cytoplasmic segment spans residues 245 to 368; the sequence is KPDIRLRWDR…QDNSFESTVN (124 aa). The chain crosses the membrane as a helical span at residues 369–389; that stretch reads IALGIFTPALIALMAGMVLFI. The Periplasmic segment spans residues 390–406; sequence VMATLMPILEMNNLMSR.

Belongs to the GSP F family. In terms of assembly, type II secretion system is composed of four main components: the outer membrane complex, the inner membrane complex, the cytoplasmic secretion ATPase and the periplasm-spanning pseudopilus. Homodimer. Interacts with EpsE/GspE and EpsL/GspL components.

It localises to the cell inner membrane. Functionally, component of the type II secretion system inner membrane complex required for the energy-dependent secretion of extracellular factors such as proteases and toxins from the periplasm. The chain is Type II secretion system protein F (epsF) from Vibrio cholerae serotype O1 (strain ATCC 39315 / El Tor Inaba N16961).